Consider the following 284-residue polypeptide: Tropomyosin (284 aa).

Residues 1–41 (MDAIKKKMQAMKLEKDNAVDRAETAEQQSRDAALRAEKAEE) are disordered. Residues 1–284 (MDAIKKKMQA…DQTFSELTGY (284 aa)) are a coiled coil. The span at 12 to 41 (KLEKDNAVDRAETAEQQSRDAALRAEKAEE) shows a compositional bias: basic and acidic residues.

Belongs to the tropomyosin family. Homodimer.

Tropomyosin, in association with the troponin complex, plays a central role in the calcium dependent regulation of muscle contraction. The protein is Tropomyosin of Haemaphysalis longicornis (Bush tick).